The chain runs to 339 residues: UDP-glucose 4-epimerase (339 aa).

NAD(+) contacts are provided by residues 12–13 (FI), 32–37 (DNLCNS), 59–60 (DI), 81–85 (FAGLK), asparagine 100, serine 125, tyrosine 150, lysine 154, and phenylalanine 179. Residues serine 125 and tyrosine 150 each contribute to the substrate site. The active-site Proton acceptor is the tyrosine 150. Residues asparagine 180, 200 to 201 (NL), 217 to 219 (SVF), arginine 232, and 293 to 296 (RAGD) contribute to the substrate site.

This sequence belongs to the NAD(P)-dependent epimerase/dehydratase family. Homodimer. NAD(+) serves as cofactor.

The enzyme catalyses UDP-alpha-D-glucose = UDP-alpha-D-galactose. Its pathway is carbohydrate metabolism; galactose metabolism. Its function is as follows. Involved in the metabolism of galactose. Plays an essential role in the incorporation of galactose into meningococcal lipopolysaccharide surface molecules, which are important for pathogenesis. Catalyzes the conversion of UDP-galactose (UDP-Gal) to UDP-glucose (UDP-Glc) through a mechanism involving the transient reduction of NAD. This chain is UDP-glucose 4-epimerase (galE), found in Neisseria meningitidis serogroup A / serotype 4A (strain DSM 15465 / Z2491).